The sequence spans 472 residues: MNFLPIFLDIHDRNCVVAGGGEVAARKVAMLLRAGAHVTVVAPRLCSELLEQLNEQSREGKLAYRAETFQDEHLADAVLVIAATDDFAVNQRISEAAKRLRIPVNVVDNPGLCSFIMPSIVDRTPVVVAVSSGGASPVLTRLLRARLETMIPMAYGRLAAYAGEFRDRVKHRFSQPAQRRRFWERVLQGPFAEMVFAGKDQAAKAWLERELENETEEPVKGEVYLVGAGPGDPELLTFRAMRLMQQADVVVYDRLVSPEILDMLRRDTPRIYAGKERNRHTMPQESINDLLVRLAKEGKRVLRLKGGDPFIFGRGGEEIETLAGHGIPFEVVPGITAANGAASYAGIPLTHRDYAQSCIFVTGHLKDGSVDLDWPMLARPKQTIVVYMGLLGLTVLCKQLIAHGLPNNTPAAIVQQGTTRKQRVLAATLETLPELTAAAHLVPPTLVIVGEVVNLHRKLAWFQPEGNLPGAE.

Residues 1–207 are precorrin-2 dehydrogenase /sirohydrochlorin ferrochelatase; that stretch reads MNFLPIFLDI…GKDQAAKAWL (207 aa). NAD(+)-binding positions include 22–23 and 43–44; these read EV and PR. Ser-132 carries the post-translational modification Phosphoserine. Positions 221–472 are uroporphyrinogen-III C-methyltransferase; sequence GEVYLVGAGP…QPEGNLPGAE (252 aa). Pro-230 is an S-adenosyl-L-methionine binding site. Residue Asp-253 is the Proton acceptor of the active site. Lys-275 acts as the Proton donor in catalysis. Residues 306–308, Ile-311, 336–337, Met-388, and Gly-417 each bind S-adenosyl-L-methionine; these read GGD and TA.

In the N-terminal section; belongs to the precorrin-2 dehydrogenase / sirohydrochlorin ferrochelatase family. The protein in the C-terminal section; belongs to the precorrin methyltransferase family.

It catalyses the reaction uroporphyrinogen III + 2 S-adenosyl-L-methionine = precorrin-2 + 2 S-adenosyl-L-homocysteine + H(+). It carries out the reaction precorrin-2 + NAD(+) = sirohydrochlorin + NADH + 2 H(+). The enzyme catalyses siroheme + 2 H(+) = sirohydrochlorin + Fe(2+). Its pathway is cofactor biosynthesis; adenosylcobalamin biosynthesis; precorrin-2 from uroporphyrinogen III: step 1/1. It participates in cofactor biosynthesis; adenosylcobalamin biosynthesis; sirohydrochlorin from precorrin-2: step 1/1. The protein operates within porphyrin-containing compound metabolism; siroheme biosynthesis; precorrin-2 from uroporphyrinogen III: step 1/1. It functions in the pathway porphyrin-containing compound metabolism; siroheme biosynthesis; siroheme from sirohydrochlorin: step 1/1. Its pathway is porphyrin-containing compound metabolism; siroheme biosynthesis; sirohydrochlorin from precorrin-2: step 1/1. Its function is as follows. Multifunctional enzyme that catalyzes the SAM-dependent methylations of uroporphyrinogen III at position C-2 and C-7 to form precorrin-2 via precorrin-1. Then it catalyzes the NAD-dependent ring dehydrogenation of precorrin-2 to yield sirohydrochlorin. Finally, it catalyzes the ferrochelation of sirohydrochlorin to yield siroheme. This Nitrosospira multiformis (strain ATCC 25196 / NCIMB 11849 / C 71) protein is Siroheme synthase.